The primary structure comprises 470 residues: Ribulose bisphosphate carboxylase large chain (470 aa).

Residues asparagine 115 and threonine 165 each coordinate substrate. Residue lysine 167 is the Proton acceptor of the active site. Position 169 (lysine 169) interacts with substrate. The Mg(2+) site is built by lysine 193, aspartate 195, and glutamate 196. N6-carboxylysine is present on lysine 193. Residue histidine 286 is the Proton acceptor of the active site. Residues arginine 287, histidine 319, and serine 371 each contribute to the substrate site.

It belongs to the RuBisCO large chain family. Type I subfamily. Heterohexadecamer of 8 large chains and 8 small chains. Forms a CsoS2-CsoS1-RuBisCO complex. Mg(2+) serves as cofactor.

The protein resides in the carboxysome. It carries out the reaction 2 (2R)-3-phosphoglycerate + 2 H(+) = D-ribulose 1,5-bisphosphate + CO2 + H2O. It catalyses the reaction D-ribulose 1,5-bisphosphate + O2 = 2-phosphoglycolate + (2R)-3-phosphoglycerate + 2 H(+). Functionally, ruBisCO catalyzes two reactions: the carboxylation of D-ribulose 1,5-bisphosphate, the primary event in carbon dioxide fixation, as well as the oxidative fragmentation of the pentose substrate in the photorespiration process. Both reactions occur simultaneously and in competition at the same active site. The polypeptide is Ribulose bisphosphate carboxylase large chain (Prochlorococcus marinus (strain MIT 9313)).